Here is a 178-residue protein sequence, read N- to C-terminus: Interleukin-1 receptor antagonist protein (178 aa).

Positions 1–26 (MEICWGPYSHLISLLLILLFHSEAAC) are cleaved as a signal peptide. C92 and C142 form a disulfide bridge. N110 is a glycosylation site (N-linked (GlcNAc...) asparagine).

The protein belongs to the IL-1 family.

The protein resides in the secreted. The protein localises to the cytoplasm. Its function is as follows. Anti-inflammatory antagonist of interleukin-1 family of proinflammatory cytokines such as interleukin-1beta/IL1B and interleukin-1alpha/IL1A. Protects from immune dysregulation and uncontrolled systemic inflammation triggered by IL1 for a range of innate stimulatory agents such as pathogens. This chain is Interleukin-1 receptor antagonist protein (Il1rn), found in Mus musculus (Mouse).